A 665-amino-acid chain; its full sequence is LisH domain-containing protein ARMC9 (665 aa).

The 33-residue stretch at 7–39 (HESELLGLVKEYLDFAEFEDTLKTFSKECKIKG) folds into the LisH domain. Residues 201 to 235 (ENGQSNKEMLQQLHQQLVEAERRSMTYLKRYNKIQ) are a coiled coil. At Ser-582 the chain carries Phosphoserine. Residues 642 to 665 (VQWSGDEPLQRPVTPGGHRNGYPV) form a disordered region.

In terms of assembly, interacts with TOGARAM1, CCDC66, CEP104, CSPP1 and CEP290. Interacts with NDUFAF2.

Its subcellular location is the cytoplasm. The protein localises to the cytoskeleton. It is found in the cilium basal body. The protein resides in the cell projection. It localises to the cilium. Its subcellular location is the microtubule organizing center. The protein localises to the centrosome. It is found in the centriole. Involved in ciliogenesis. It is required for appropriate acetylation and polyglutamylation of ciliary microtubules, and regulation of cilium length. Acts as a positive regulator of hedgehog (Hh)signaling. May participate in the trafficking and/or retention of GLI2 and GLI3 proteins at the ciliary tip. The polypeptide is LisH domain-containing protein ARMC9 (ARMC9) (Pongo abelii (Sumatran orangutan)).